A 333-amino-acid polypeptide reads, in one-letter code: Ketol-acid reductoisomerase (NADP(+)) (333 aa).

The KARI N-terminal Rossmann domain occupies 1–171; the sequence is MSNHTQPKIA…GGARANIIKT (171 aa). NADP(+) contacts are provided by residues 14 to 17, Arg-37, Thr-42, and 72 to 75; these read YGSQ and DMVQ. The active site involves His-97. Residue Gly-123 participates in NADP(+) binding. A KARI C-terminal knotted domain is found at 172–317; sequence TFKEETETDL…KKLRAKMVWL (146 aa). Residues Asp-180, Glu-184, Glu-216, and Glu-220 each contribute to the Mg(2+) site. Ser-241 provides a ligand contact to substrate.

This sequence belongs to the ketol-acid reductoisomerase family. It depends on Mg(2+) as a cofactor.

It catalyses the reaction (2R)-2,3-dihydroxy-3-methylbutanoate + NADP(+) = (2S)-2-acetolactate + NADPH + H(+). It carries out the reaction (2R,3R)-2,3-dihydroxy-3-methylpentanoate + NADP(+) = (S)-2-ethyl-2-hydroxy-3-oxobutanoate + NADPH + H(+). The protein operates within amino-acid biosynthesis; L-isoleucine biosynthesis; L-isoleucine from 2-oxobutanoate: step 2/4. It participates in amino-acid biosynthesis; L-valine biosynthesis; L-valine from pyruvate: step 2/4. Its function is as follows. Involved in the biosynthesis of branched-chain amino acids (BCAA). Catalyzes an alkyl-migration followed by a ketol-acid reduction of (S)-2-acetolactate (S2AL) to yield (R)-2,3-dihydroxy-isovalerate. In the isomerase reaction, S2AL is rearranged via a Mg-dependent methyl migration to produce 3-hydroxy-3-methyl-2-ketobutyrate (HMKB). In the reductase reaction, this 2-ketoacid undergoes a metal-dependent reduction by NADPH to yield (R)-2,3-dihydroxy-isovalerate. This chain is Ketol-acid reductoisomerase (NADP(+)), found in Xanthomonas axonopodis pv. citri (strain 306).